Consider the following 271-residue polypeptide: Phosphatidylglycerol--prolipoprotein diacylglyceryl transferase (271 aa).

A run of 7 helical transmembrane segments spans residues 10 to 30 (VALA…LVGI), 56 to 76 (LVFW…VLFY), 92 to 112 (WKGG…ALWF), 120 to 140 (FFQL…AGRI), 174 to 194 (PSQL…LWLF), 202 to 222 (MAVS…VEFV), and 237 to 257 (LTMG…LIWL). Residue R139 coordinates a 1,2-diacyl-sn-glycero-3-phospho-(1'-sn-glycerol).

It belongs to the Lgt family.

Its subcellular location is the cell inner membrane. The catalysed reaction is L-cysteinyl-[prolipoprotein] + a 1,2-diacyl-sn-glycero-3-phospho-(1'-sn-glycerol) = an S-1,2-diacyl-sn-glyceryl-L-cysteinyl-[prolipoprotein] + sn-glycerol 1-phosphate + H(+). Its pathway is protein modification; lipoprotein biosynthesis (diacylglyceryl transfer). Catalyzes the transfer of the diacylglyceryl group from phosphatidylglycerol to the sulfhydryl group of the N-terminal cysteine of a prolipoprotein, the first step in the formation of mature lipoproteins. This is Phosphatidylglycerol--prolipoprotein diacylglyceryl transferase from Pseudomonas fluorescens (strain Pf0-1).